We begin with the raw amino-acid sequence, 706 residues long: Capsid vertex component 1 (706 aa).

Residues 321–347 are disordered; it reads DSGRFVNSGPQRHLPPQGPRSPASRDC.

This sequence belongs to the herpesviridae CVC1 protein family. In terms of assembly, interacts (via C-terminus) with capsid vertex component 2/CVC2.

It localises to the virion. Its subcellular location is the host nucleus. In terms of biological role, capsid vertex-specific component that plays a role during viral DNA encapsidation, assuring correct genome cleavage and presumably stabilizing capsids that contain full-length viral genomes. This Equus caballus (Horse) protein is Capsid vertex component 1.